We begin with the raw amino-acid sequence, 100 residues long: Probable DNA-binding protein HU (100 aa).

This sequence belongs to the bacterial histone-like protein family.

Its function is as follows. Histone-like DNA-binding protein which is capable of wrapping DNA to stabilize it, and thus to prevent its denaturation under extreme environmental conditions. The protein is Probable DNA-binding protein HU (hup) of Chlamydia pneumoniae (Chlamydophila pneumoniae).